The chain runs to 179 residues: Large ribosomal subunit protein uL5 (179 aa).

Belongs to the universal ribosomal protein uL5 family. In terms of assembly, part of the 50S ribosomal subunit; part of the 5S rRNA/L5/L18/L25 subcomplex. Contacts the 5S rRNA and the P site tRNA. Forms a bridge to the 30S subunit in the 70S ribosome.

This is one of the proteins that bind and probably mediate the attachment of the 5S RNA into the large ribosomal subunit, where it forms part of the central protuberance. In the 70S ribosome it contacts protein S13 of the 30S subunit (bridge B1b), connecting the 2 subunits; this bridge is implicated in subunit movement. Contacts the P site tRNA; the 5S rRNA and some of its associated proteins might help stabilize positioning of ribosome-bound tRNAs. This is Large ribosomal subunit protein uL5 from Rickettsia bellii (strain OSU 85-389).